We begin with the raw amino-acid sequence, 154 residues long: Small ribosomal subunit protein uS15 (154 aa).

Residues 1 to 23 (MNKKRDKGQSHSTRPARAGPPRW) form a disordered region.

Belongs to the universal ribosomal protein uS15 family. As to quaternary structure, part of the 30S ribosomal subunit.

This Staphylothermus marinus (strain ATCC 43588 / DSM 3639 / JCM 9404 / F1) protein is Small ribosomal subunit protein uS15.